We begin with the raw amino-acid sequence, 141 residues long: HTH-type transcriptional repressor NsrR (141 aa).

The HTH rrf2-type domain occupies 2–129 (QLTSFTDYGL…DNYTLADMVK (128 aa)). A DNA-binding region (H-T-H motif) is located at residues 28 to 51 (ISQVTEVYGVSRNHMVKIINQLSR). [2Fe-2S] cluster-binding residues include Cys91, Cys96, and Cys102.

The cofactor is [2Fe-2S] cluster.

Functionally, nitric oxide-sensitive repressor of genes involved in protecting the cell against nitrosative stress. May require iron for activity. In Yersinia pseudotuberculosis serotype O:1b (strain IP 31758), this protein is HTH-type transcriptional repressor NsrR.